The chain runs to 132 residues: Small ribosomal subunit protein uS11 (132 aa).

The protein belongs to the universal ribosomal protein uS11 family. Part of the 30S ribosomal subunit. Interacts with proteins S7 and S18. Binds to IF-3.

Its function is as follows. Located on the platform of the 30S subunit, it bridges several disparate RNA helices of the 16S rRNA. Forms part of the Shine-Dalgarno cleft in the 70S ribosome. This chain is Small ribosomal subunit protein uS11, found in Chlamydia caviae (strain ATCC VR-813 / DSM 19441 / 03DC25 / GPIC) (Chlamydophila caviae).